Consider the following 484-residue polypeptide: Probable autolysin PH (484 aa).

Positions 5-148 (KNQAEKWFDN…YYDDPMYFIR (144 aa)) constitute a Peptidase C51 domain. Positions 181-363 (IMLVAGHGYN…YSKLIAGAIH (183 aa)) constitute a MurNAc-LAA domain. The region spanning 402–472 (KETGYYTVAN…IATGEVDKAG (71 aa)) is the SH3b domain.

It catalyses the reaction Hydrolyzes the link between N-acetylmuramoyl residues and L-amino acid residues in certain cell-wall glycopeptides.. In terms of biological role, has weak lytic activity toward S.aureus cells. Full-length protein has no activity, but fusion of the Peptidase C51 domain to the lysostaphin SH3 cell wall binding domain yields an active chimeric enzyme, suggesting that PH may be functional. The chain is Probable autolysin PH from Staphylococcus aureus (strain NCTC 8325 / PS 47).